The sequence spans 709 residues: Elongation factor G (709 aa).

The tr-type G domain maps to 9–296 (AKVRNIGIMA…AVVRYLPSPL (288 aa)). Residues 18 to 25 (AHIDAGKT), 86 to 90 (DTPGH), and 140 to 143 (NKLD) contribute to the GTP site.

This sequence belongs to the TRAFAC class translation factor GTPase superfamily. Classic translation factor GTPase family. EF-G/EF-2 subfamily.

The protein localises to the cytoplasm. In terms of biological role, catalyzes the GTP-dependent ribosomal translocation step during translation elongation. During this step, the ribosome changes from the pre-translocational (PRE) to the post-translocational (POST) state as the newly formed A-site-bound peptidyl-tRNA and P-site-bound deacylated tRNA move to the P and E sites, respectively. Catalyzes the coordinated movement of the two tRNA molecules, the mRNA and conformational changes in the ribosome. In Streptomyces griseus subsp. griseus (strain JCM 4626 / CBS 651.72 / NBRC 13350 / KCC S-0626 / ISP 5235), this protein is Elongation factor G.